Consider the following 474-residue polypeptide: Tumor necrosis factor receptor superfamily member 1B (474 aa).

The first 22 residues, 1–22, serve as a signal peptide directing secretion; the sequence is MAPAALWVALVFELQLWATGHT. Topologically, residues 23–258 are extracellular; that stretch reads VPAQVVLTPY…PIIEQSTKGG (236 aa). A glycan (O-linked (GalNAc...) threonine) is linked at T30. 4 TNFR-Cys repeats span residues 39-77, 78-119, 120-164, and 165-203; these read ECQI…TVCA, DCEA…NRVC, ACEA…VLCK, and ACAP…AVCA. Cystine bridges form between C40/C54, C55/C68, C58/C76, C79/C94, C97/C111, C101/C119, C121/C127, C136/C145, C139/C163, and C166/C181. N69 is a glycosylation site (N-linked (GlcNAc...) asparagine). N195 is a glycosylation site (N-linked (GlcNAc...) asparagine). Residues T208 and T224 are each glycosylated (O-linked (GalNAc...) threonine). The interval 220 to 243 is disordered; sequence QPEPTRSQPLDQEPGPSQTPSILT. Residues 259 to 288 form a helical membrane-spanning segment; that stretch reads ISLPIGLIVGVTSLGLLMLGLVNCIILVQR. Residues 289 to 474 lie on the Cytoplasmic side of the membrane; sequence KKKPSCLQRD…WFDQIAVKVA (186 aa). 3 disordered regions span residues 295–314, 321–378, and 397–463; these read LQRD…DAVG, LTTA…GSHG, and SQCS…PSQA. Basic and acidic residues predominate over residues 297–310; sequence RDAKVPHVPDEKSQ. Composition is skewed to low complexity over residues 324-338 and 363-378; these read APSS…SASA and ARAS…GSHG. S331 is subject to Phosphoserine. Polar residues predominate over residues 429–442; it reads ECPSQSPCETTETL.

Binds to TRAF2. Interacts with BMX. Interacts (activated form) with XPNPEP3.

Its subcellular location is the membrane. Functionally, receptor with high affinity for TNFSF2/TNF-alpha and approximately 5-fold lower affinity for homotrimeric TNFSF1/lymphotoxin-alpha. The TRAF1/TRAF2 complex recruits the apoptotic suppressors BIRC2 and BIRC3 to TNFRSF1B/TNFR2. This is Tumor necrosis factor receptor superfamily member 1B (Tnfrsf1b) from Mus musculus (Mouse).